The chain runs to 130 residues: General stress protein 13 (130 aa).

The S1 motif domain occupies 8-77; sequence GSVYTGKVTG…EKGKISLSIR (70 aa). Residues 76–109 are disordered; it reads IRATQAAPEKKESKPRKPKAAQVSEEASTPQGFN. Over residues 100-109 the composition is skewed to polar residues; it reads EEASTPQGFN.

As to quaternary structure, found in association with the 30S subunit of the ribosome.

It is found in the cytoplasm. The chain is General stress protein 13 (yugI) from Bacillus subtilis (strain 168).